The chain runs to 338 residues: MNLAQENLNSPNNLGNNATKSPKETVILLNMGGPNSLYEVGVFLKNMFDDPFILTIKNNFMRKMVGKMIVNSRIEKSKKIYEKLGGKSPLTPITFALTERLNELDPSRFYTYAMRYTPPYASMVLQDLALKEVESLVFFSMYPQYSSTTTLSSFNDAFNALKSLETFRPKVRVIERFYASEKLNEIILNTILSTLNNHKSQDFVLIFSVHGLPKSIIDAGDTYQQECEHHVDLLKDLMRQKNIHFKQVLLSYQSKLGPMKWLEPSTEGLIEKHRKSNIIIYPLAFTIDNSETLYELEIQYRLMAARLAIKEYLVCPCLNDSIEFAKFIIELVKNLKDE.

Fe cation-binding residues include His-210 and Glu-291.

The protein belongs to the ferrochelatase family.

The protein localises to the cytoplasm. It carries out the reaction heme b + 2 H(+) = protoporphyrin IX + Fe(2+). It functions in the pathway porphyrin-containing compound metabolism; protoheme biosynthesis; protoheme from protoporphyrin-IX: step 1/1. In terms of biological role, catalyzes the ferrous insertion into protoporphyrin IX. The protein is Ferrochelatase of Helicobacter acinonychis (strain Sheeba).